Reading from the N-terminus, the 492-residue chain is Malonyl-CoA decarboxylase, mitochondrial (492 aa).

A mitochondrion-targeting transit peptide spans 1–38; the sequence is MRGLGPSLRARRLLPLRYPPRPPGPRGPRLCSGLTASA. The alpha-helical domain stretch occupies residues 39 to 189; it reads MDELLRRAVP…VLKSMLSEWF (151 aa). Lys58 is subject to N6-acetyllysine. Lys167 bears the N6-acetyllysine; alternate mark. Lys167 is subject to N6-succinyllysine; alternate. The segment at 190 to 492 is catalytic domain; sequence SSGFLNLERV…VAQFQSNSKL (303 aa). An N6-acetyllysine modification is found at Lys210. Position 221 is an N6-succinyllysine (Lys221). A malonyl-CoA-binding site is contributed by 298 to 304; sequence QGVELGT. Residue Lys316 is modified to N6-acetyllysine. Malonyl-CoA is bound at residue Ser328. Ser328 functions as the Proton acceptor in the catalytic mechanism. Lys385 is modified (N6-acetyllysine; alternate). Lys385 carries the N6-succinyllysine; alternate modification. Residue Lys388 is modified to N6-acetyllysine. His422 serves as a coordination point for malonyl-CoA. Residue His422 is the Proton donor of the active site. Lys441 and Lys471 each carry N6-acetyllysine. The Microbody targeting signal signature appears at 490–492; it reads SKL.

Homotetramer. Dimer of dimers. The two subunits within a dimer display conformational differences suggesting that at any given moment, only one of the two subunits is competent for malonyl-CoA binding and catalytic activity. Under oxidizing conditions, can form disulfide-linked homotetramers (in vitro). Associates with the peroxisomal targeting signal receptor PEX5. Post-translationally, acetylation at Lys-471 activates malonyl-CoA decarboxylase activity. Deacetylation at Lys-471 by SIRT4 represses activity, leading to promote lipogenesis. In terms of processing, interchain disulfide bonds may form in peroxisomes (Potential). Interchain disulfide bonds are not expected to form in the reducing environment of the cytoplasm and mitochondria. In terms of tissue distribution, expressed in liver, heart, skeletal muscles and adipose tissues (at protein level). Ubiquitous. Strongly expressed in liver, kidney, heart, skeletal muscle and adipose tissues. Weakly expressed in brain.

The protein localises to the cytoplasm. Its subcellular location is the mitochondrion matrix. It localises to the peroxisome. The protein resides in the peroxisome matrix. The enzyme catalyses malonyl-CoA + H(+) = acetyl-CoA + CO2. Its pathway is metabolic intermediate biosynthesis; acetyl-CoA biosynthesis; acetyl-CoA from malonyl-CoA: step 1/1. Malonyl-CoA decarboxylase activity does not require any cofactors or divalent metal ions. In terms of biological role, catalyzes the conversion of malonyl-CoA to acetyl-CoA. In the fatty acid biosynthesis MCD selectively removes malonyl-CoA and thus assures that methyl-malonyl-CoA is the only chain elongating substrate for fatty acid synthase and that fatty acids with multiple methyl side chains are produced. In peroxisomes it may be involved in degrading intraperoxisomal malonyl-CoA, which is generated by the peroxisomal beta-oxidation of odd chain-length dicarboxylic fatty acids. Plays a role in the metabolic balance between glucose and lipid oxidation in muscle independent of alterations in insulin signaling. May play a role in controlling the extent of ischemic injury by promoting glucose oxidation. The sequence is that of Malonyl-CoA decarboxylase, mitochondrial from Rattus norvegicus (Rat).